A 743-amino-acid polypeptide reads, in one-letter code: MLHFNRCHHLKKITQKCFSSIHVKTDKHAQQFLSRTFALAELRKSWYSTHSLVGDKNIILMGPPGAGKTTVGRIIGQKLGCCVIDVDDDILEKTWNMSVSEKLQDVGNEQFLEEEGKAVLNFSASGSVISLTGSNPMHDASMWHLKKNGIIVYLDVPLLDLIHRLKLMKTDRIVGQNSGTSVKDLLKFRRQYYKKWYDARVFCESGASPEEVADKVLNAIKRYQDVDSETFISTRHVWPKDGEQKLSAKFFSEAVIEGLASDGGLFVPAKEFPKLSCGEWKSLVGATYIERAQILLERCIHPADIPAARLGEMIETAYGENFACSKIAPVRHLSGNQFILELFHGPTGSFKDLSLQLMPHIFAHCIPPSCNYVILVATSGDTGSAVLNGFSRLNKNDKQRIAVVAFFPENGVSDFQKAQIIGSQRENGWAVGVESDFDFCQTAIKRIFDDSDFTGFLTVEYGTILSSANSINWGRLLPQVVYHASAYLDLISQGFISFGSPVDVCIPTGNFGNILAAVYAKMMGIPIRKFICASNQNHVLTDFIKTGHYDLRERKLAQTFSPSIDILKSSNLERHLHLMANKDGQLMTELFNRLESQHHFQIEKALVEKLQQDFIADWCSEGECLAAINSTYNTSGYILDPHTAVAKVVADRVQDKSCPLIISSTAHYSKFAPAIMQALKIKEINETSSSQLYLLGSYNALPPLHEALLERTKQQEKMEYQVCAADVNVLKSHVEKLIQNQFI.

Residue lysine 281 is modified to N6-acetyllysine. At lysine 351 the chain carries N6-(pyridoxal phosphate)lysine.

It belongs to the threonine synthase family. Requires pyridoxal 5'-phosphate as cofactor.

This is Threonine synthase-like 1 (THNSL1) from Pongo abelii (Sumatran orangutan).